Here is a 665-residue protein sequence, read N- to C-terminus: MADPSSYRPAPGTIPESPGVYRFRDGTGRVIYVGKARNLRNRLNSYFADPVNLHQRTRQMVFTAESVDWISVATEVEALQQEFTEIKQYDPRFNVRYRDDKSYPYLAVTVSEEFPRLQVMRGAKRKGVRYFGPYSHAWAIRETLDLLLRVFPARTCSSGVFKRAGQVGRPCLLGYIDKCAAPCVGSVSAEEHRAIVEGFCDFMAGRTDLMVRRLEREMADASAELEFERAARLRDDLAALRRAMEKQTVVFGDGTDADVVAFADDPLEAAVQVFHVRDGRIRGQRGWVVEKTEELTIGDLVHHFCTQVYGGEQGEADVPRELLVPELPADVEALADWLSDHRGSRVTLRVPQRGDKRALLETVARNATDALARHKLKRAGDLTTRSKALDEIAETLGLQTAPLRIECYDISQIQGTDVVASMVVFEDGLPRKSEYRRFIIRGATDDLSAMSEVLRRRFARYLDARAETGEAGVESAGDPATPAGPASTGPGVPDEPRVGTLVDPTTGRPRKFAYPPQLVVVDGGAPQVAAAAQALAELGVDDVALCGLAKRLEEVWLPDDDFPAILPRTSEGLYLLQRVRDEAHRFAITFHRQRRSRRMTESALDRVPGLGEVRRKALLRHFGSLKRLSAASVEEITEVPGVGQRTAEAILAALGDSTQPDEPRT.

The GIY-YIG domain occupies 16–95 (ESPGVYRFRD…IKQYDPRFNV (80 aa)). The UVR domain maps to 208 to 243 (DLMVRRLEREMADASAELEFERAARLRDDLAALRRA). The tract at residues 470-507 (EAGVESAGDPATPAGPASTGPGVPDEPRVGTLVDPTTG) is disordered. The span at 475-491 (SAGDPATPAGPASTGPG) shows a compositional bias: low complexity.

The protein belongs to the UvrC family. As to quaternary structure, interacts with UvrB in an incision complex.

The protein localises to the cytoplasm. Functionally, the UvrABC repair system catalyzes the recognition and processing of DNA lesions. UvrC both incises the 5' and 3' sides of the lesion. The N-terminal half is responsible for the 3' incision and the C-terminal half is responsible for the 5' incision. The polypeptide is UvrABC system protein C (Salinispora tropica (strain ATCC BAA-916 / DSM 44818 / JCM 13857 / NBRC 105044 / CNB-440)).